Reading from the N-terminus, the 423-residue chain is Histidine--tRNA ligase (423 aa).

This sequence belongs to the class-II aminoacyl-tRNA synthetase family. In terms of assembly, homodimer.

It localises to the cytoplasm. It catalyses the reaction tRNA(His) + L-histidine + ATP = L-histidyl-tRNA(His) + AMP + diphosphate + H(+). The protein is Histidine--tRNA ligase of Rhodococcus opacus (strain B4).